Here is a 173-residue protein sequence, read N- to C-terminus: Bifunctional protein PyrR (173 aa).

Substrate-binding positions include 40–41 (TR), 97–105 (DDVLYTGRT), and Arg130. The PRPP-binding signature appears at 93–105 (VILIDDVLYTGRT).

Belongs to the purine/pyrimidine phosphoribosyltransferase family. PyrR subfamily. As to quaternary structure, homodimer and homohexamer; in equilibrium.

It catalyses the reaction UMP + diphosphate = 5-phospho-alpha-D-ribose 1-diphosphate + uracil. Its function is as follows. Regulates transcriptional attenuation of the pyrimidine nucleotide (pyr) operon by binding in a uridine-dependent manner to specific sites on pyr mRNA. This disrupts an antiterminator hairpin in the RNA and favors formation of a downstream transcription terminator, leading to a reduced expression of downstream genes. In terms of biological role, also displays a weak uracil phosphoribosyltransferase activity which is not physiologically significant. This Streptococcus pyogenes serotype M6 (strain ATCC BAA-946 / MGAS10394) protein is Bifunctional protein PyrR.